Reading from the N-terminus, the 223-residue chain is Type II restriction enzyme BglII (223 aa).

The Mg(2+) site is built by Asp84 and Val94.

Homodimer. It depends on Mg(2+) as a cofactor.

It carries out the reaction Endonucleolytic cleavage of DNA to give specific double-stranded fragments with terminal 5'-phosphates.. A P subtype restriction enzyme that recognizes the double-stranded sequence 5'-AGATCT-3' and cleaves after A-1. The polypeptide is Type II restriction enzyme BglII (bglIIR) (Bacillus subtilis).